A 179-amino-acid chain; its full sequence is MRTIRPEKQQAVAELKEALQNAKSVVLADNLGLTVAQVTQLRRELRQAGVELKVAKNTLIGIAARELGIEGLEPYLHGTTTLAFSYEDEAAGAKKIREFFAKEREPKFVMKAGILEGKVIDADGVKALADLPNRETLLAQVLAGIQAPLQGVAGAINGLLASFAYALDARIRQLEGAEA.

Belongs to the universal ribosomal protein uL10 family. In terms of assembly, part of the ribosomal stalk of the 50S ribosomal subunit. The N-terminus interacts with L11 and the large rRNA to form the base of the stalk. The C-terminus forms an elongated spine to which L12 dimers bind in a sequential fashion forming a multimeric L10(L12)X complex.

Functionally, forms part of the ribosomal stalk, playing a central role in the interaction of the ribosome with GTP-bound translation factors. This Symbiobacterium thermophilum (strain DSM 24528 / JCM 14929 / IAM 14863 / T) protein is Large ribosomal subunit protein uL10.